We begin with the raw amino-acid sequence, 245 residues long: Zinc finger protein AZF1 (245 aa).

Residues 1–15 (MALETLNSPTATTTA) are compositionally biased toward polar residues. Disordered regions lie at residues 1–57 (MALE…NKNL) and 112–141 (LGGH…SHSN). The segment at 97 to 119 (YKCTVCGKSFSSYQALGGHKTSH) adopts a C2H2-type 1 zinc-finger fold. Polar residues predominate over residues 123–134 (TNTSITSGNQEL). The segment at 164-186 (HTCSICFKSFASGQALGGHKRCH) adopts a C2H2-type 2 zinc-finger fold. Residues 193–231 (GNGNGSSSNSVELVAGSDVSDVDNERWSEESAIGGHRGF) form a disordered region.

Highly expressed in roots and at lower levels in leaves and stems.

It localises to the nucleus. Transcriptional repressor involved in the inhibition of plant growth under abiotic stress conditions. Can repress the expression of various genes, including osmotic stress and abscisic acid-repressive genes and auxin-inducible genes, by binding to their promoter regions in a DNA sequence-specific manner. The protein is Zinc finger protein AZF1 (AZF1) of Arabidopsis thaliana (Mouse-ear cress).